We begin with the raw amino-acid sequence, 48 residues long: Large ribosomal subunit protein bL33B (48 aa).

This sequence belongs to the bacterial ribosomal protein bL33 family.

In Streptococcus thermophilus (strain CNRZ 1066), this protein is Large ribosomal subunit protein bL33B.